The following is a 463-amino-acid chain: Formate-nitrite transporter 2 (463 aa).

Over M1–R100 the chain is Cytoplasmic. The helical transmembrane segment at L101 to V121 threads the bilayer. At L122 to K142 the chain is on the extracellular side. Residues F143 to L163 form a helical membrane-spanning segment. The Cytoplasmic segment spans residues F164–W189. A helical membrane pass occupies residues L190–L210. Over T211–E237 the chain is Extracellular. The chain crosses the membrane as a helical span at residues C238 to A258. The Cytoplasmic portion of the chain corresponds to S259 to K265. Residues V266–A286 traverse the membrane as a helical segment. The Extracellular segment spans residues N287 to D305. A helical membrane pass occupies residues V306–V326. Over G327 to V463 the chain is Cytoplasmic. The interval S424–V463 is disordered. Positions T450 to V463 are enriched in polar residues.

Belongs to the FNT transporter (TC 1.A.16) family. In terms of assembly, homopentamer.

The protein localises to the cell membrane. It carries out the reaction (S)-lactate(in) + H(+)(in) = (S)-lactate(out) + H(+)(out). The catalysed reaction is formate(in) + H(+)(in) = formate(out) + H(+)(out). The enzyme catalyses pyruvate(out) + H(+)(out) = pyruvate(in) + H(+)(in). It catalyses the reaction acetate(out) + H(+)(out) = acetate(in) + H(+)(in). With respect to regulation, inhibited by p-chloromercuribenzene sulfonate (pCMBS). Methyl methanethiosulfonate (MMTS) inhibits L-lactate but not formate transport. Inhibited by the Malaria Box compound MMV007839. Inhibited by BH-296, BH-317, BH-326 and BH-388 compounds. Functionally, monocarboxylate-proton symporter; active in acidic-to-neutral pH range. Transports L-lactate and formate. The sequence is that of Formate-nitrite transporter 2 from Toxoplasma gondii (strain ATCC 50611 / Me49).